A 1077-amino-acid chain; its full sequence is Teashirt homolog 1-B (1077 aa).

Disordered stretches follow at residues 1–110 and 142–179; these read MPRR…NASY and NEKA…SCTN. The segment covering 26–36 has biased composition (acidic residues); sequence TEEDNLEDDGL. Residues 56–69 are compositionally biased toward polar residues; that stretch reads TQSYQNSPISSATN. Low complexity predominate over residues 160-179; that stretch reads SGPTSDPGTPTTITSSSCTN. Residues 248–272 form a C2H2-type 1 zinc finger; that stretch reads FRCKDCSAAYDTLVELTVHMNETGH. The segment covering 274–286 has biased composition (basic and acidic residues); the sequence is RDDNRDREAERTK. A disordered region spans residues 274-300; that stretch reads RDDNRDREAERTKRWSKPRKRSLMEME. A C2H2-type 2 zinc finger spans residues 309 to 333; the sequence is LKCMYCGHSFESLQDLSVHMIKTKH. Positions 362 to 394 are disordered; it reads ALPDSPEQAGISPGASVSESAKDPKAANPYVTP. Residues 418-442 form a C2H2-type 3 zinc finger; the sequence is LKCMECGSSHDTLQQLTAHMMVTGH. 2 disordered regions span residues 473-530 and 849-873; these read PPTT…KIEP and GRLT…SSFE. The span at 497–529 shows a compositional bias: basic and acidic residues; that stretch reads HSEEKKDPEKEKVNIGEVEKKIKEENEDPEKIE. Residues 853–862 are compositionally biased toward polar residues; sequence PKSSTPSTVS. The homeobox DNA-binding region spans 885 to 955; it reads RKGRQSNWNP…NVKYQLRRTG (71 aa). 2 C2H2-type zinc fingers span residues 970–992 and 1037–1060; these read FFCN…LETH and FQCK…SKTH.

The protein belongs to the teashirt C2H2-type zinc-finger protein family.

It is found in the nucleus. In terms of biological role, probable transcriptional regulator involved in developmental processes. May act as a transcriptional repressor (Potential). Involved in two major neuronal regionalization processes: primary anteroposterior (AP) axis patterning of the CNS and segmentation of the cranial neuronal crest (CNS) development. The protein is Teashirt homolog 1-B (tshz1-b) of Xenopus laevis (African clawed frog).